The following is a 1237-amino-acid chain: Anion exchange protein 2 (1237 aa).

Residues 1 to 237 (MSSAPRRPAS…SYNLQERRRI (237 aa)) form a disordered region. The Cytoplasmic segment spans residues 1–703 (MSSAPRRPAS…SDFRDALDPQ (703 aa)). 2 stretches are compositionally biased toward basic and acidic residues: residues 37–49 (ELHR…RFEE) and 58–75 (GGEE…EYHR). 2 stretches are compositionally biased toward basic residues: residues 76-85 (QSSHHIHHPL) and 94-110 (RRRK…RRRP). The residue at position 113 (serine 113) is a Phosphoserine. Residues 122-133 (EEGEEDEEEANE) show a composition bias toward acidic residues. Over residues 137–151 (ARAPTEPSPASTPSS) the composition is skewed to low complexity. Phosphoserine occurs at positions 144, 170, and 172. Residues 206 to 215 (TAGGDNGGAS) show a composition bias toward gly residues. Serine 239 carries the post-translational modification Phosphoserine. Threonine 253 carries the phosphothreonine modification. Residue lysine 270 is modified to N6-methyllysine. The disordered stretch occupies residues 281-316 (RRHLVRKNAKGSAQSSREGREPGPTPRSRPRAPHKP). Phosphoserine is present on serine 439. Positions 445-464 (SLLGHHHGQGAESDPHVTEP) are disordered. 4 helical membrane-spanning segments follow: residues 704 to 727 (CVAA…GLLG), 733 to 770 (LIGV…LLVF), 790 to 812 (VWIG…SFLV), and 822 to 843 (IFAF…IKIF). The segment at 704–1237 (CVAAVIFIYF…DEYNEMPMPV (534 aa)) is membrane (anion exchange). The Extracellular segment spans residues 844–896 (QEHPLHGCSVSNSSETDSSENATWAGAGSTLGPANRSSAGQAGQGRPRGQPNT). Asparagine 855, asparagine 864, and asparagine 878 each carry an N-linked (GlcNAc...) asparagine glycan. Residues 897-914 (ALLSLVLMAGTFFIAFFL) traverse the membrane as a helical segment. The Cytoplasmic segment spans residues 915–929 (RKFKNSRFFPGRIRR). 5 consecutive transmembrane segments (helical) span residues 930 to 950 (VIGD…DYSI), 984 to 1006 (PFPV…LIFM), 1032 to 1053 (LLLI…LAAA), 1087 to 1132 (VTGL…IQFY), and 1159 to 1195 (MHLF…TVPL). Cysteine 1169 carries S-palmitoyl cysteine lipidation.

Belongs to the anion exchanger (TC 2.A.31) family. As to expression, expressed in the ileum (at protein level).

The protein localises to the cell membrane. It localises to the apical cell membrane. It is found in the basolateral cell membrane. It catalyses the reaction hydrogencarbonate(in) + chloride(out) = hydrogencarbonate(out) + chloride(in). Functionally, sodium-independent anion exchanger which mediates the electroneutral exchange of chloride for bicarbonate ions across the cell membrane. Plays an important role in osteoclast differentiation and function. Regulates bone resorption and calpain-dependent actin cytoskeleton organization in osteoclasts via anion exchange-dependent control of pH. Essential for intracellular pH regulation in CD8(+) T-cells upon CD3 stimulation, modulating CD8(+) T-cell response. This Oryctolagus cuniculus (Rabbit) protein is Anion exchange protein 2 (SLC4A2).